The following is a 572-amino-acid chain: Squalene monooxygenase (572 aa).

At 1 to 19 (MWTFLGIATFTYFYKKCGD) the chain is on the cytoplasmic side. Positions 1 to 98 (MWTFLGIATF…EQLESKKCRK (98 aa)) are interaction with MARCHF6. Residues 20-40 (VTLANKELLLCVLVFLSLGLV) lie within the membrane without spanning it. Topologically, residues 41–572 (LSYRCRHRHG…IYSEMKYLVH (532 aa)) are cytoplasmic. The required for degradation in response to high membrane cholesterol levels stretch occupies residues 61–72 (QFAAFSDILSAL). The segment at 116 to 572 (TSFVTDPEVI…IYSEMKYLVH (457 aa)) is sufficient for enzyme activity. FAD is bound by residues 131–132 (VL), 151–152 (ER), arginine 159, arginine 232, valine 248, aspartate 406, and methionine 419. A hydrophobic; mediates interaction with membranes region spans residues 514 to 572 (PLVLIRHFFSVAIYATYFCFKSEPWATKPRALFSSGAVLYKACSILFPLIYSEMKYLVH).

The protein belongs to the squalene monooxygenase family. Interacts (via N-terminal domain) with MARCHF6. Interacts with SMIM22; this interaction modulates lipid droplet formation. It depends on FAD as a cofactor. Ubiquitinated by MARCHF6 in response to high cholesterol levels in intracellular membranes, leading to proteasomal degradation. In terms of tissue distribution, detected in liver.

The protein localises to the microsome membrane. Its subcellular location is the endoplasmic reticulum membrane. The catalysed reaction is squalene + reduced [NADPH--hemoprotein reductase] + O2 = (S)-2,3-epoxysqualene + oxidized [NADPH--hemoprotein reductase] + H2O + H(+). It participates in terpene metabolism; lanosterol biosynthesis; lanosterol from farnesyl diphosphate: step 2/3. Catalyzes the stereospecific oxidation of squalene to (S)-2,3-epoxysqualene, and is considered to be a rate-limiting enzyme in steroid biosynthesis. The protein is Squalene monooxygenase (Sqle) of Mus musculus (Mouse).